Here is a 158-residue protein sequence, read N- to C-terminus: Ribosome maturation factor RimP (158 aa).

Belongs to the RimP family.

It is found in the cytoplasm. Its function is as follows. Required for maturation of 30S ribosomal subunits. The polypeptide is Ribosome maturation factor RimP (Lactobacillus gasseri (strain ATCC 33323 / DSM 20243 / BCRC 14619 / CIP 102991 / JCM 1131 / KCTC 3163 / NCIMB 11718 / NCTC 13722 / AM63)).